A 203-amino-acid chain; its full sequence is MIIKENSDKQTQIYNFLIEFTKSKGYPPSVREICQAVSLKSTSTVHGHLKRLEKKGLIYRDPTKPRALEIVELSNEEKELIDIPIVGKVTAGMPILATENIEDMFQIPINYVKHNNDLFILKVTGDSMIEAGILDGDLAIIEQKNVATNGDIVVALIENEATIKRFFKENGFIRLQPENKNYEPIIVEDCSILGKLVGIYRAY.

Positions 30-50 (VREICQAVSLKSTSTVHGHLK) form a DNA-binding region, H-T-H motif. Catalysis depends on for autocatalytic cleavage activity residues S127 and K164.

Belongs to the peptidase S24 family. Homodimer.

It carries out the reaction Hydrolysis of Ala-|-Gly bond in repressor LexA.. In terms of biological role, represses a number of genes involved in the response to DNA damage (SOS response), including recA and lexA. In the presence of single-stranded DNA, RecA interacts with LexA causing an autocatalytic cleavage which disrupts the DNA-binding part of LexA, leading to derepression of the SOS regulon and eventually DNA repair. The protein is LexA repressor of Clostridium perfringens (strain ATCC 13124 / DSM 756 / JCM 1290 / NCIMB 6125 / NCTC 8237 / Type A).